We begin with the raw amino-acid sequence, 168 residues long: Nuclear cap-binding protein subunit 2 (168 aa).

MRNA is bound by residues tyrosine 23, tyrosine 46, 115–119 (RTDWD), 126–130 (RQYGR), and 136–137 (QV). An RRM domain is found at 43 to 121 (STLYVGNLSF…RIVRTDWDAG (79 aa)).

The protein belongs to the RRM NCBP2 family. Component of the nuclear cap-binding complex (CBC), a heterodimer composed of NCBP1/CBP80 and NCBP2/CBP20 that interacts with m7GpppG-capped RNA.

Its subcellular location is the nucleus. It localises to the cytoplasm. Functionally, component of the cap-binding complex (CBC), which binds co-transcriptionally to the 5' cap of pre-mRNAs and is involved in various processes such as pre-mRNA splicing, translation regulation, nonsense-mediated mRNA decay, RNA-mediated gene silencing (RNAi) by microRNAs (miRNAs) and mRNA export. The CBC complex is involved in mRNA export from the nucleus, leading to the recruitment of the mRNA export machinery to the 5' end of mRNA and to mRNA export in a 5' to 3' direction through the nuclear pore. The CBC complex is also involved in mediating U snRNA and intronless mRNAs export from the nucleus. The CBC complex is essential for a pioneer round of mRNA translation, before steady state translation when the CBC complex is replaced by cytoplasmic cap-binding protein eIF4E. The pioneer round of mRNA translation mediated by the CBC complex plays a central role in nonsense-mediated mRNA decay (NMD), NMD only taking place in mRNAs bound to the CBC complex, but not on eIF4E-bound mRNAs. The CBC complex enhances NMD in mRNAs containing at least one exon-junction complex (EJC), promoting the interaction between UPF1 and UPF2. The CBC complex is also involved in 'failsafe' NMD, which is independent of the EJC complex, while it does not participate in Staufen-mediated mRNA decay (SMD). During cell proliferation, the CBC complex is also involved in microRNAs (miRNAs) biogenesis via its interaction with SRRT/ARS2, thereby being required for miRNA-mediated RNA interference. The CBC complex also acts as a negative regulator of PARN, thereby acting as an inhibitor of mRNA deadenylation. In the CBC complex, NCBP2/CBP20 recognizes and binds capped RNAs (m7GpppG-capped RNA) but requires NCBP1/CBP80 to stabilize the movement of its N-terminal loop and lock the CBC into a high affinity cap-binding state with the cap structure. The conventional cap-binding complex with NCBP2 binds both small nuclear RNA (snRNA) and messenger (mRNA) and is involved in their export from the nucleus. This chain is Nuclear cap-binding protein subunit 2 (NCBP2), found in Gallus gallus (Chicken).